Here is a 309-residue protein sequence, read N- to C-terminus: Carbamate kinase 3 (309 aa).

The protein belongs to the carbamate kinase family.

Its subcellular location is the cytoplasm. It carries out the reaction hydrogencarbonate + NH4(+) + ATP = carbamoyl phosphate + ADP + H2O + H(+). It participates in metabolic intermediate metabolism; carbamoyl phosphate degradation; CO(2) and NH(3) from carbamoyl phosphate: step 1/1. This chain is Carbamate kinase 3 (arcC3), found in Staphylococcus aureus (strain USA300).